Here is a 183-residue protein sequence, read N- to C-terminus: Peptidyl-tRNA hydrolase (183 aa).

Tyr14 is a binding site for tRNA. The active-site Proton acceptor is the His19. Positions 55 and 57 each coordinate tRNA.

Belongs to the PTH family. As to quaternary structure, monomer.

It is found in the cytoplasm. The catalysed reaction is an N-acyl-L-alpha-aminoacyl-tRNA + H2O = an N-acyl-L-amino acid + a tRNA + H(+). Hydrolyzes ribosome-free peptidyl-tRNAs (with 1 or more amino acids incorporated), which drop off the ribosome during protein synthesis, or as a result of ribosome stalling. In terms of biological role, catalyzes the release of premature peptidyl moieties from peptidyl-tRNA molecules trapped in stalled 50S ribosomal subunits, and thus maintains levels of free tRNAs and 50S ribosomes. This is Peptidyl-tRNA hydrolase from Thermus thermophilus (strain ATCC BAA-163 / DSM 7039 / HB27).